The following is a 1333-amino-acid chain: Xanthine dehydrogenase/oxidase (1333 aa).

One can recognise a 2Fe-2S ferredoxin-type domain in the interval 4–91 (DKLVFFVNGR…HVAVTTVEGI (88 aa)). Residues Cys43, Cys48, Cys51, Cys73, Cys113, Cys116, Cys148, and Cys150 each coordinate [2Fe-2S] cluster. The 186-residue stretch at 229–414 (FEGERVTWIQ…LSIEIPYSRE (186 aa)) folds into the FAD-binding PCMH-type domain. FAD-binding positions include 257–264 (LVVGNTEI), Phe337, 347–351 (SVGGN), Asp360, Leu404, and Lys422. 2 cysteine pairs are disulfide-bonded: Cys509–Cys1318 and Cys536–Cys993. Positions 768 and 799 each coordinate Mo-molybdopterin. Substrate contacts are provided by Glu803 and Arg881. Arg913 contacts Mo-molybdopterin. Substrate-binding residues include Phe915 and Thr1011. Ala1080 provides a ligand contact to Mo-molybdopterin. Glu1262 serves as the catalytic Proton acceptor.

The protein belongs to the xanthine dehydrogenase family. Homodimer. Interacts with BTN1A1. [2Fe-2S] cluster is required as a cofactor. The cofactor is FAD. Requires Mo-molybdopterin as cofactor. Subject to partial proteolysis; this alters the enzyme from the dehydrogenase form (D) to the oxidase form (O). In terms of processing, contains sulfhydryl groups that are easily oxidized (in vitro); this alters the enzyme from the dehydrogenase form (D) to the oxidase form (O). Detected in milk (at protein level).

Its subcellular location is the cytoplasm. It localises to the peroxisome. The protein resides in the secreted. It catalyses the reaction xanthine + NAD(+) + H2O = urate + NADH + H(+). It carries out the reaction hypoxanthine + NAD(+) + H2O = xanthine + NADH + H(+). The catalysed reaction is xanthine + O2 + H2O = urate + H2O2. Its activity is regulated as follows. Can be converted from the dehydrogenase form (D) to the oxidase form (O) irreversibly by proteolysis or reversibly through the oxidation of sulfhydryl groups. Key enzyme in purine degradation. Catalyzes the oxidation of hypoxanthine to xanthine. Catalyzes the oxidation of xanthine to uric acid. Contributes to the generation of reactive oxygen species. Has also low oxidase activity towards aldehydes (in vitro). This is Xanthine dehydrogenase/oxidase (XDH) from Homo sapiens (Human).